Consider the following 243-residue polypeptide: Orotidine 5'-phosphate decarboxylase (243 aa).

Substrate is bound by residues D16, K38, 65 to 74, T120, R181, Q190, G210, and R211; that span reads DLKLHDIPNT. Catalysis depends on K67, which acts as the Proton donor.

The protein belongs to the OMP decarboxylase family. Type 1 subfamily. Homodimer.

It catalyses the reaction orotidine 5'-phosphate + H(+) = UMP + CO2. The protein operates within pyrimidine metabolism; UMP biosynthesis via de novo pathway; UMP from orotate: step 2/2. In terms of biological role, catalyzes the decarboxylation of orotidine 5'-monophosphate (OMP) to uridine 5'-monophosphate (UMP). In Bradyrhizobium sp. (strain ORS 278), this protein is Orotidine 5'-phosphate decarboxylase.